Reading from the N-terminus, the 537-residue chain is Synaptotagmin-2 (537 aa).

At 1-2 (MG) the chain is on the cytoplasmic side. The helical transmembrane segment at 3-23 (IISTILGVIGFGFGTTIGIVI) threads the bilayer. Topologically, residues 24-537 (GYYLFIYFQS…QIELQWRNSS (514 aa)) are lumenal. Positions 67 to 249 (DFDRIDWLNK…WPKTLNVQIM (183 aa)) constitute an SMP-LTD domain. The interval 227-505 (QEIIKDQVAN…TLGYVVINLG (279 aa)) is phospholipid binding. C2 domains follow at residues 240-362 (WPKT…LMTL) and 402-517 (DPNA…NDKY). Ca(2+)-binding residues include aspartate 276, aspartate 282, aspartate 332, and glutamate 334.

This sequence belongs to the synaptotagmin family. Requires Ca(2+) as cofactor.

It is found in the golgi apparatus membrane. In terms of biological role, may play an important role in regulating an unconventional protein trafficking from the cytosol to the extracellular matrix. The sequence is that of Synaptotagmin-2 (SYT2) from Arabidopsis thaliana (Mouse-ear cress).